A 349-amino-acid polypeptide reads, in one-letter code: MENIETILRLAEEKILLVQNLKALQEYKVEFLGKNGIVTGELKKLGSLNEQERKEFGLKINKLKDKIQNIIRATEEILEEQELKLKLAADKIDLTIPARRYKQGSIHPITQCSEELIQVFSQFGFTIENGPNIENDFHNFTALNFEDDHPARQMHDTFYLKGQENNKPLLLRTHTSTVQIRAMKSGKPPFRFIAPGRTYRSDSDMTHTPMFHQIEGLVIDKNINMGHLKYVITEFIKNFFENSNIELRFRPSFFPFTEPSAEVDIRMNKHDKWLEVLGCGMVHPNVLKNVGIDSSEYQGVAFGLGVERFAMLKYNIKDLRQFFEGDMRWLKHYNFGSFDIPSLAGGLTK.

Glutamate 258 serves as a coordination point for Mg(2+).

Belongs to the class-II aminoacyl-tRNA synthetase family. Phe-tRNA synthetase alpha subunit type 1 subfamily. Tetramer of two alpha and two beta subunits. Requires Mg(2+) as cofactor.

It localises to the cytoplasm. The enzyme catalyses tRNA(Phe) + L-phenylalanine + ATP = L-phenylalanyl-tRNA(Phe) + AMP + diphosphate + H(+). In Rickettsia akari (strain Hartford), this protein is Phenylalanine--tRNA ligase alpha subunit.